A 56-amino-acid polypeptide reads, in one-letter code: Cecropin-A2 (56 aa).

At R55 the chain carries Arginine amide.

The protein belongs to the cecropin family.

Its subcellular location is the secreted. In terms of biological role, cecropins have lytic and antibacterial activity against several Gram-positive and Gram-negative bacteria. The sequence is that of Cecropin-A2 (CecA2) from Drosophila yakuba (Fruit fly).